Reading from the N-terminus, the 298-residue chain is Tyrosine recombinase XerC (298 aa).

Positions 1–84 (MNHIQEAFLN…TLRTLYEYWM (84 aa)) constitute a Core-binding (CB) domain. The 182-residue stretch at 105 to 286 (YLPQFSLEEE…SNQQLRKVYL (182 aa)) folds into the Tyr recombinase domain. Active-site residues include Arg-145, Lys-169, His-238, Arg-241, and His-264. The O-(3'-phospho-DNA)-tyrosine intermediate role is filled by Tyr-273.

Belongs to the 'phage' integrase family. XerC subfamily. Forms a cyclic heterotetrameric complex composed of two molecules of XerC and two molecules of XerD.

It localises to the cytoplasm. Site-specific tyrosine recombinase, which acts by catalyzing the cutting and rejoining of the recombining DNA molecules. The XerC-XerD complex is essential to convert dimers of the bacterial chromosome into monomers to permit their segregation at cell division. It also contributes to the segregational stability of plasmids. The sequence is that of Tyrosine recombinase XerC from Staphylococcus aureus.